The chain runs to 342 residues: Cellular tumor antigen p53 (342 aa).

A transcription activation (acidic) region spans residues 1-35 (MEEADLTLPLSQDTFHDLWNNVFLSTENESLAPPE). A DNA-binding region spans residues 68–255 (NYAGEHGFNL…KTEEGNLEKS (188 aa)). The Zn(2+) site is built by Cys142, His145, Cys201, and Cys205. Residues 236-243 (RVCACPGR) are interaction with DNA. Residues 244–256 (DRKTEEGNLEKSG) show a composition bias toward basic and acidic residues. The interval 244 to 287 (DRKTEEGNLEKSGTKQTKKRKSAPAPDTSTAKKSKSASSGEDED) is disordered. Positions 261–278 (KKRKSAPAPDTSTAKKSK) match the Bipartite nuclear localization signal motif. Over residues 271 to 282 (TSTAKKSKSASS) the composition is skewed to low complexity. The oligomerization stretch occupies residues 288-317 (KEIYTLSIRGRNRYLWFKSLNDGLELMDKT). The Nuclear export signal signature appears at 302 to 313 (LWFKSLNDGLEL). The segment at 318–342 (GPKIKQEIPAPSSGKRLLKGGSDSD) is disordered. The interval 319–336 (PKIKQEIPAPSSGKRLLK) is basic (repression of DNA-binding).

Belongs to the p53 family. As to quaternary structure, binds DNA as a homotetramer. Zn(2+) serves as cofactor.

The protein resides in the cytoplasm. Its subcellular location is the nucleus. Multifunctional transcription factor that induces cell cycle arrest, DNA repair or apoptosis upon binding to its target DNA sequence. Acts as a tumor suppressor in many tumor types; induces growth arrest or apoptosis depending on the physiological circumstances and cell type. Negatively regulates cell division by controlling expression of a set of genes required for this process. One of the activated genes is an inhibitor of cyclin-dependent kinases. Apoptosis induction seems to be mediated either by stimulation of BAX and FAS antigen expression, or by repression of Bcl-2 expression. This is Cellular tumor antigen p53 (tp53) from Xiphophorus hellerii (Green swordtail).